We begin with the raw amino-acid sequence, 256 residues long: Thiazole synthase (256 aa).

K95 acts as the Schiff-base intermediate with DXP in catalysis. 1-deoxy-D-xylulose 5-phosphate-binding positions include G156, A182 to G183, and N204 to T205.

It belongs to the ThiG family. Homotetramer. Forms heterodimers with either ThiH or ThiS.

It localises to the cytoplasm. It catalyses the reaction [ThiS sulfur-carrier protein]-C-terminal-Gly-aminoethanethioate + 2-iminoacetate + 1-deoxy-D-xylulose 5-phosphate = [ThiS sulfur-carrier protein]-C-terminal Gly-Gly + 2-[(2R,5Z)-2-carboxy-4-methylthiazol-5(2H)-ylidene]ethyl phosphate + 2 H2O + H(+). It functions in the pathway cofactor biosynthesis; thiamine diphosphate biosynthesis. Functionally, catalyzes the rearrangement of 1-deoxy-D-xylulose 5-phosphate (DXP) to produce the thiazole phosphate moiety of thiamine. Sulfur is provided by the thiocarboxylate moiety of the carrier protein ThiS. In vitro, sulfur can be provided by H(2)S. The chain is Thiazole synthase from Escherichia fergusonii (strain ATCC 35469 / DSM 13698 / CCUG 18766 / IAM 14443 / JCM 21226 / LMG 7866 / NBRC 102419 / NCTC 12128 / CDC 0568-73).